A 360-amino-acid polypeptide reads, in one-letter code: Archaemetzincin-2 (360 aa).

His-254 is a Zn(2+) binding site. The active-site Proton acceptor is the Glu-255. His-258, His-264, Cys-265, Cys-270, Cys-289, and Cys-292 together coordinate Zn(2+).

This sequence belongs to the peptidase M54 family. It depends on Zn(2+) as a cofactor. As to expression, down-regulated in testis from patients with maturation arrest (MA) or Sertoli cell-only syndrome (SCOS).

Functionally, probable zinc metalloprotease. This is Archaemetzincin-2 (AMZ2) from Homo sapiens (Human).